The sequence spans 320 residues: Cytochrome f (320 aa).

An N-terminal signal peptide occupies residues 1 to 35 (MQTRNTFSSIKEEITRSISVSLMIYIITWAPVSNA). Residues Y36, C56, C59, and H60 each contribute to the heme site. The helical transmembrane segment at 286–306 (VQGLLFFFASVILAQIFLVLK) threads the bilayer.

This sequence belongs to the cytochrome f family. In terms of assembly, the 4 large subunits of the cytochrome b6-f complex are cytochrome b6, subunit IV (17 kDa polypeptide, petD), cytochrome f and the Rieske protein, while the 4 small subunits are PetG, PetL, PetM and PetN. The complex functions as a dimer. Heme is required as a cofactor.

The protein resides in the plastid. Its subcellular location is the chloroplast thylakoid membrane. In terms of biological role, component of the cytochrome b6-f complex, which mediates electron transfer between photosystem II (PSII) and photosystem I (PSI), cyclic electron flow around PSI, and state transitions. This chain is Cytochrome f, found in Cucumis sativus (Cucumber).